The sequence spans 766 residues: Pumilio domain-containing protein 12 (766 aa).

2 disordered regions span residues 63–98 (KKSS…KSKK) and 152–197 (AQEE…GDES). Residues 79-88 (SLCSESSFGS) are compositionally biased toward polar residues. The segment covering 179 to 193 (PADDENLESVDEQAG) has biased composition (acidic residues). Positions 245-602 (ARAQKCKELW…LYAGITENLY (358 aa)) constitute a PUM-HD domain. Pumilio repeat units lie at residues 313 to 348 (ELTP…IIIN), 461 to 496 (SLKD…LIVK), 497 to 534 (NFKD…VIVS), and 535 to 571 (ELAN…REIT).

The sequence is that of Pumilio domain-containing protein 12 (puf-12) from Caenorhabditis elegans.